Consider the following 243-residue polypeptide: UMP-CMP kinase 2 (243 aa).

69–74 is an ATP binding site; that stretch reads GSGKGT. The NMP stretch occupies residues 89 to 118; that stretch reads SAGDLLRSEISTGREKGELILNIIKEGKIV. Residues R95, 116 to 118, and 143 to 146 contribute to the a ribonucleoside 5'-phosphate site; these read KIV and GFPR. CMP is bound at residue N150. Residues 181–189 are LID; the sequence is GRNQGRVDD. Residue R182 coordinates ATP. A ribonucleoside 5'-phosphate is bound by residues R186 and R197.

It belongs to the adenylate kinase family. UMP-CMP kinase subfamily. In terms of assembly, monomer. Requires Mg(2+) as cofactor.

Its subcellular location is the cytoplasm. The protein localises to the nucleus. The catalysed reaction is UMP + ATP = UDP + ADP. The enzyme catalyses CMP + ATP = CDP + ADP. It carries out the reaction dCMP + ATP = dCDP + ADP. Functionally, catalyzes the phosphorylation of pyrimidine nucleoside monophosphates at the expense of ATP. Plays an important role in de novo pyrimidine nucleotide biosynthesis. Has preference for UMP and CMP as phosphate acceptors. The polypeptide is UMP-CMP kinase 2 (Oryza sativa subsp. japonica (Rice)).